The sequence spans 276 residues: Mitochondrial distribution and morphology protein 12 (276 aa).

In terms of domain architecture, SMP-LTD spans 1 to 276 (MSIDIQWNLL…FVWPSYFTLY (276 aa)). Residues 68-104 (TLYSDDSSSLDDEESDREEENMTELPPYGATENGVHK) form a disordered region. Residues 75–89 (SSLDDEESDREEENM) are compositionally biased toward acidic residues.

Belongs to the MDM12 family. Component of the ER-mitochondria encounter structure (ERMES) or MDM complex, composed of mmm1, mdm10, mdm12 and mdm34. A mmm1 homodimer associates with one molecule of mdm12 on each side in a pairwise head-to-tail manner, and the SMP-LTD domains of mmm1 and mdm12 generate a continuous hydrophobic tunnel for phospholipid trafficking.

Its subcellular location is the mitochondrion outer membrane. It is found in the endoplasmic reticulum membrane. Functionally, component of the ERMES/MDM complex, which serves as a molecular tether to connect the endoplasmic reticulum (ER) and mitochondria. Components of this complex are involved in the control of mitochondrial shape and protein biogenesis, and function in nonvesicular lipid trafficking between the ER and mitochondria. Mdm12 is required for the interaction of the ER-resident membrane protein mmm1 and the outer mitochondrial membrane-resident beta-barrel protein mdm10. The mdm12-mmm1 subcomplex functions in the major beta-barrel assembly pathway that is responsible for biogenesis of all mitochondrial outer membrane beta-barrel proteins, and acts in a late step after the SAM complex. The mdm10-mdm12-mmm1 subcomplex further acts in the TOM40-specific pathway after the action of the mdm12-mmm1 complex. Essential for establishing and maintaining the structure of mitochondria and maintenance of mtDNA nucleoids. This is Mitochondrial distribution and morphology protein 12 from Schizosaccharomyces japonicus (strain yFS275 / FY16936) (Fission yeast).